We begin with the raw amino-acid sequence, 329 residues long: Ferredoxin--NADP reductase 2 (329 aa).

Thr-18, Glu-37, Gln-45, Tyr-50, Val-90, Phe-124, Asp-285, and Ser-326 together coordinate FAD.

Belongs to the ferredoxin--NADP reductase type 2 family. As to quaternary structure, homodimer. FAD serves as cofactor.

The catalysed reaction is 2 reduced [2Fe-2S]-[ferredoxin] + NADP(+) + H(+) = 2 oxidized [2Fe-2S]-[ferredoxin] + NADPH. The polypeptide is Ferredoxin--NADP reductase 2 (Bacillus cytotoxicus (strain DSM 22905 / CIP 110041 / 391-98 / NVH 391-98)).